Here is a 611-residue protein sequence, read N- to C-terminus: uncharacterized protein (611 aa).

In terms of domain architecture, SAC spans 51–351 (LYGFIRLKIY…DYHKQGSRNL (301 aa)).

The protein to yeast RSD1 and S.pombe SpBC19F5.03.

This is an uncharacterized protein from Schizosaccharomyces pombe (strain 972 / ATCC 24843) (Fission yeast).